Here is a 706-residue protein sequence, read N- to C-terminus: Drebrin (706 aa).

The residue at position 2 (alanine 2) is an N-acetylalanine. The ADF-H domain occupies 3 to 134; sequence GVSFSGHRLE…DAGAIGQRLS (132 aa). Phosphoserine occurs at positions 141 and 142. A compositionally biased stretch (basic and acidic residues) spans 209–236; sequence ERMEQERQEQEERERRYREREQQIEEHR. The disordered stretch occupies residues 209–497; sequence ERMEQERQEQ…AEPAASVTSV (289 aa). The residue at position 241 (serine 241) is a Phosphoserine. A compositionally biased stretch (basic and acidic residues) spans 288–298; that stretch reads DNPREFFRQQE. A compositionally biased stretch (low complexity) spans 331–345; sequence SDSGPSSSSSSSSSP. Phosphoserine is present on serine 344. The segment covering 357 to 366 has biased composition (polar residues); the sequence is RTPNLSSSLP. Phosphothreonine occurs at positions 379 and 383. Residues 382 to 396 show a composition bias toward polar residues; sequence PTRSPSDSSTASTPI. Serine 385, serine 387, and serine 393 each carry phosphoserine. Threonine 394 bears the Phosphothreonine mark. Residues 411–422 are compositionally biased toward pro residues; sequence QPPPPPPPPPPT. A compositionally biased stretch (low complexity) spans 453–497; sequence AAEPPQAQEPPLLQSSPLEDSMCTESPEQAALAAPAEPAASVTSV. At serine 468 the chain carries Phosphoserine. Threonine 550 carries the phosphothreonine modification. The interval 633–677 is disordered; the sequence is EPHLLTNGETTQKEGTQASEGYFSQSQEEEFAQSEEPCAKVPPPV. Over residues 639–651 the composition is skewed to polar residues; the sequence is NGETTQKEGTQAS. Serine 658 is modified (phosphoserine).

In terms of assembly, interacts with RUFY3. Interacts with CXCR4; this interaction is enhanced by antigenic stimulation. Interacts (via ADF-H domain) with ZMYND8 (via N-terminus); the interaction leads to sequestering of ZMYND8 in the cytoplasm. In terms of tissue distribution, expressed in the hippocampus, with expression in the pyramidal cells of CA1, CA2 and CA3 and in the granule cells of the dentate gyrus (at protein level). Highly expressed in brain, also present in stomach and to a lesser degree in kidney, colon, and urinary bladder. The E2 isoform is specifically expressed in adult stomach, kidney, and cultured cells.

Its subcellular location is the cytoplasm. The protein localises to the cell projection. It is found in the dendrite. The protein resides in the cell cortex. It localises to the cell junction. Its subcellular location is the growth cone. Functionally, actin cytoskeleton-organizing protein that plays a role in the formation of cell projections. Required for actin polymerization at immunological synapses (IS) and for the recruitment of the chemokine receptor CXCR4 to IS. Plays a role in dendritic spine morphogenesis and organization, including the localization of the dopamine receptor DRD1 to the dendritic spines. Involved in memory-related synaptic plasticity in the hippocampus. The sequence is that of Drebrin (Dbn1) from Mus musculus (Mouse).